Reading from the N-terminus, the 71-residue chain is Small ribosomal subunit protein bS21 (71 aa).

The tract at residues 47 to 71 (RENATRAKRHAKRVARENARNTRLY) is disordered. Residues 60–71 (VARENARNTRLY) show a composition bias toward basic and acidic residues.

This sequence belongs to the bacterial ribosomal protein bS21 family.

The chain is Small ribosomal subunit protein bS21 from Histophilus somni (strain 129Pt) (Haemophilus somnus).